Here is a 105-residue protein sequence, read N- to C-terminus: Protein S100-A11 (105 aa).

The residue at position 1 (methionine 1) is an N-acetylmethionine. Alanine 2 carries the post-translational modification N-acetylalanine; in Protein S100-A11, N-terminally processed. Lysine 3 carries the N6-acetyllysine modification. Phosphoserine is present on residues serine 5 and serine 6. Threonine 10 carries the phosphothreonine modification. 2 EF-hand domains span residues 13-49 (CIES…ELAA) and 55-90 (KDPG…LAMA). Position 27 is an N6-acetyllysine (lysine 27). Ca(2+) contacts are provided by threonine 33, glutamate 38, aspartate 68, asparagine 70, aspartate 72, glutamine 74, and glutamate 79.

The protein belongs to the S-100 family. In terms of assembly, homodimer; disulfide-linked. Post-translationally, phosphorylation at Thr-10 by PRKCA significantly suppresses homodimerization and promotes association with NCL/nucleolin which induces nuclear translocation.

Its subcellular location is the cytoplasm. It is found in the nucleus. Functionally, facilitates the differentiation and the cornification of keratinocytes. The sequence is that of Protein S100-A11 (S100A11) from Homo sapiens (Human).